A 228-amino-acid polypeptide reads, in one-letter code: Protein Iojap, chloroplastic (228 aa).

Residues methionine 1–proline 54 are disordered. Residues methionine 1–arginine 62 constitute a chloroplast transit peptide.

Belongs to the Iojap/RsfS family. Interacts with chloroplast ribosomal protein uL14c (rpl14).

It is found in the plastid. The protein localises to the chloroplast. In terms of biological role, may be a ribosome silencing factor (Potential). Involved in plastid biogenesis. Plastids affected by a mutation in Iojap lose the ability to perform translation and lack plastid ribosomes. The polypeptide is Protein Iojap, chloroplastic (Ij) (Zea mays (Maize)).